A 492-amino-acid polypeptide reads, in one-letter code: Lysine--tRNA ligase (492 aa).

Residues aspartate 395 and glutamate 402 each contribute to the Mg(2+) site.

This sequence belongs to the class-II aminoacyl-tRNA synthetase family. In terms of assembly, homodimer. Mg(2+) is required as a cofactor.

The protein localises to the cytoplasm. The enzyme catalyses tRNA(Lys) + L-lysine + ATP = L-lysyl-tRNA(Lys) + AMP + diphosphate. The polypeptide is Lysine--tRNA ligase (Thermus thermophilus (strain ATCC BAA-163 / DSM 7039 / HB27)).